A 204-amino-acid chain; its full sequence is MTPPGRLYLRRVCSTPILLLLGLLLALPPEAQGLPGVGLPPSAAQPAHQHPPKHLARGTLKPAAHLVGDPSTPDSLRWRANTDRAFLRHGFLLSNNSLLVPTSGLYFVYSQVVFSGEGCFPKATPTPLYLAHEVQLFSSQYPFHVPLLSAQKSVCPGPQGPWVRSVYQGAVFLLTQGDQLSTHTDGTPHLLLSPSSVFFGAFAL.

The N-terminal stretch at 1–33 (MTPPGRLYLRRVCSTPILLLLGLLLALPPEAQG) is a signal peptide. Residues 62-204 (PAAHLVGDPS…SSVFFGAFAL (143 aa)) enclose the THD domain. A glycan (N-linked (GlcNAc...) asparagine) is linked at Asn-95. Cys-119 and Cys-155 are joined by a disulfide.

It belongs to the tumor necrosis factor family. Homotrimer, and heterotrimer of either two LTB and one LTA subunits or (less prevalent) two LTA and one LTB subunits. Interacts with TNFRSF14.

The protein resides in the secreted. It localises to the membrane. Its function is as follows. Cytokine that in its homotrimeric form binds to TNFRSF1A/TNFR1, TNFRSF1B/TNFBR and TNFRSF14/HVEM. In its heterotrimeric form with LTB binds to TNFRSF3/LTBR. Lymphotoxin is produced by lymphocytes and is cytotoxic for a wide range of tumor cells in vitro and in vivo. The chain is Lymphotoxin-alpha (LTA) from Sus scrofa (Pig).